The following is a 64-amino-acid chain: Large ribosomal subunit protein bL35 (64 aa).

The disordered stretch occupies residues 1-22 (MPKAKTHSGASKRFRRTGTGKI).

Belongs to the bacterial ribosomal protein bL35 family.

In Mycobacterium tuberculosis (strain ATCC 25177 / H37Ra), this protein is Large ribosomal subunit protein bL35.